Here is a 538-residue protein sequence, read N- to C-terminus: MSYKPSAKTEVRRNRYKVSVDADEGRRRREDNMVEIRKNKREENLQKKRREGFNPSMASQPGQDFSSSLPTETRLENIQQMIAGVMSEDRDLQLEATASFRRLLSIERNPPINEVVQSGVVPHIVQFLSRDDFTQLQFEAAWALTNIASGTSENTRVIIDSGAVPLFVKLLSSASEEVREQAVWALGNVAGDSPKCRDHVLSCEAMMSLLAQFHEHSKLSMLRNATWTLSNFCRGKPQPAFEQTKAALPALERLLHSTDEEVLTDASWALSYLSDGTNEKIQTVIDAGVIPRLVQLLAHPSPSVLIPALRTIGNIVTGDDIQTQAVISSQALPGLLNLLKNTYKKSIKKEACWTISNITAGNTSQIQEVFQAGIIRPLINLLEIGEFEIKKEAVWAISNATSGGNHDQIKFLVSQGCIRPLCDLLPCPDPRVVTVTLEGLENILKVGEAEKNLGNTGNDNLYAQMIEDADGLDKIENLQSHDNNEIYEKAVKILESYWAADDEEEDIGGVDAPENVQSSGFQFGNQSGNAPTGGFNFG.

Residues 1–58 (MSYKPSAKTEVRRNRYKVSVDADEGRRRREDNMVEIRKNKREENLQKKRREGFNPSMA) form the IBB domain. Residues 1–69 (MSYKPSAKTE…QPGQDFSSSL (69 aa)) form a disordered region. The span at 7–46 (AKTEVRRNRYKVSVDADEGRRRREDNMVEIRKNKREENLQ) shows a compositional bias: basic and acidic residues. Polar residues predominate over residues 56 to 69 (SMASQPGQDFSSSL). 8 ARM repeats span residues 109 to 149 (NPPI…NIAS), 152 to 191 (SENTRVIIDSGAVPLFVKLLSSASEEVREQAVWALGNVAG), 194 to 234 (PKCR…NFCR), 236 to 275 (KPQPAFEQTKAALPALERLLHSTDEEVLTDASWALSYLSD), 278 to 317 (NEKIQTVIDAGVIPRLVQLLAHPSPSVLIPALRTIGNIVT), 320 to 360 (DIQT…NITA), 363 to 402 (TSQIQEVFQAGIIRPLINLLEIGEFEIKKEAVWAISNATS), and 406 to 445 (HDQIKFLVSQGCIRPLCDLLPCPDPRVVTVTLEGLENILK).

Belongs to the importin alpha family. In terms of assembly, forms a complex with importin subunit beta-1.

It localises to the nucleus envelope. Binds to conventional NLS motifs and mediates nuclear protein import across the nuclear envelope. Acts as a cellular receptor for the nuclear import of the virD2 protein of Agrobacterium, but is not essential for Agrobacterium-mediated root transformation. This chain is Importin subunit alpha-6, found in Arabidopsis thaliana (Mouse-ear cress).